The chain runs to 493 residues: DM7 family protein GM11958 (493 aa).

The tract at residues 434–493 is disordered; it reads ATKSTDTRDDGMNTADYQSQFPELEQDSEPEPEPEPEPQTEDEGEDEDIEILASLCSGSI. The segment covering 457-483 has biased composition (acidic residues); that stretch reads LEQDSEPEPEPEPEPQTEDEGEDEDIE.

Belongs to the DM7 family.

In Drosophila sechellia (Fruit fly), this protein is DM7 family protein GM11958.